Here is an 84-residue protein sequence, read N- to C-terminus: Sulfur carrier protein TusA (84 aa).

The active-site Cysteine persulfide intermediate is cysteine 19.

It belongs to the sulfur carrier protein TusA family. As to quaternary structure, interacts with IscS.

It localises to the cytoplasm. It participates in tRNA modification. In terms of biological role, sulfur carrier protein involved in sulfur trafficking in the cell. Part of a sulfur-relay system required for 2-thiolation during synthesis of 2-thiouridine of the modified wobble base 5-methylaminomethyl-2-thiouridine (mnm(5)s(2)U) in tRNA. Interacts with IscS and stimulates its cysteine desulfurase activity. Accepts an activated sulfur from IscS, which is then transferred to TusD, and thus determines the direction of sulfur flow from IscS to 2-thiouridine formation. Also appears to be involved in sulfur transfer for the biosynthesis of molybdopterin. The chain is Sulfur carrier protein TusA from Proteus mirabilis (strain HI4320).